The primary structure comprises 289 residues: Purine nucleoside phosphorylase (289 aa).

The residue at position 1 (methionine 1) is an N-acetylmethionine. Phosphate-binding positions include serine 33, histidine 64, and 84-86; that span reads RFH. An a purine D-ribonucleoside-binding site is contributed by tyrosine 88. Alanine 116 lines the phosphate pocket. A purine D-ribonucleoside is bound by residues glutamate 201 and methionine 219. Serine 220 contributes to the phosphate binding site. A purine D-ribonucleoside-binding residues include asparagine 243 and histidine 257.

The protein belongs to the PNP/MTAP phosphorylase family. As to quaternary structure, homotrimer.

The protein localises to the cytoplasm. The catalysed reaction is inosine + phosphate = alpha-D-ribose 1-phosphate + hypoxanthine. The enzyme catalyses guanosine + phosphate = alpha-D-ribose 1-phosphate + guanine. It catalyses the reaction 2'-deoxyguanosine + phosphate = 2-deoxy-alpha-D-ribose 1-phosphate + guanine. It carries out the reaction 2'-deoxyinosine + phosphate = 2-deoxy-alpha-D-ribose 1-phosphate + hypoxanthine. It participates in purine metabolism; purine nucleoside salvage. Its function is as follows. Catalyzes the phosphorolytic breakdown of the N-glycosidic bond in the beta-(deoxy)ribonucleoside molecules, with the formation of the corresponding free purine bases and pentose-1-phosphate. Preferentially acts on 6-oxopurine nucleosides including inosine and guanosine. The protein is Purine nucleoside phosphorylase (Pnp) of Mus musculus (Mouse).